The following is a 469-amino-acid chain: Biotin synthase (469 aa).

One can recognise a Radical SAM core domain in the interval 51-278; it reads MTVKVNYLVN…DKEIRMAGGR (228 aa). 3 residues coordinate [4Fe-4S] cluster: cysteine 66, cysteine 70, and cysteine 73. [2Fe-2S] cluster is bound by residues cysteine 110, cysteine 143, cysteine 203, and arginine 273. The interval 326–469 is disordered; it reads AGPDPSRDRH…GAGTSVAPNA (144 aa). 2 stretches are compositionally biased toward low complexity: residues 363 to 384 and 405 to 428; these read GSAA…APAD and AGGP…MSPA.

It belongs to the radical SAM superfamily. Biotin synthase family. As to quaternary structure, homodimer. The cofactor is [4Fe-4S] cluster. Requires [2Fe-2S] cluster as cofactor.

It catalyses the reaction (4R,5S)-dethiobiotin + (sulfur carrier)-SH + 2 reduced [2Fe-2S]-[ferredoxin] + 2 S-adenosyl-L-methionine = (sulfur carrier)-H + biotin + 2 5'-deoxyadenosine + 2 L-methionine + 2 oxidized [2Fe-2S]-[ferredoxin]. It participates in cofactor biosynthesis; biotin biosynthesis; biotin from 7,8-diaminononanoate: step 2/2. In terms of biological role, catalyzes the conversion of dethiobiotin (DTB) to biotin by the insertion of a sulfur atom into dethiobiotin via a radical-based mechanism. The chain is Biotin synthase from Kocuria rhizophila (strain ATCC 9341 / DSM 348 / NBRC 103217 / DC2201).